Here is a 355-residue protein sequence, read N- to C-terminus: Undecaprenyl-phosphate alpha-N-acetylglucosaminyl 1-phosphate transferase (355 aa).

A run of 8 helical transmembrane segments spans residues 1-21, 39-59, 63-83, 123-143, 182-202, 208-228, 237-257, and 315-335; these read MLSIFVTFLGAFLTLIVMRPL, GTIPLIGGASLFVGNLCYYLM, QLRLPYLYLFSIFVLLAIGIL, FQLTLGSIGLIITVFATIAII, WSFALIVSILPYLMLNLGIPF, VFMGDAGSTLIGFTIIWILLL, MNPVTALWIIAIPLIDMVAII, and WAMFVGFFILFFLYVYSITHA.

The protein belongs to the glycosyltransferase 4 family. WecA subfamily. Mg(2+) is required as a cofactor. It depends on Mn(2+) as a cofactor.

The protein localises to the cell inner membrane. It catalyses the reaction di-trans,octa-cis-undecaprenyl phosphate + UDP-N-acetyl-alpha-D-glucosamine = N-acetyl-alpha-D-glucosaminyl-di-trans,octa-cis-undecaprenyl diphosphate + UMP. It participates in bacterial outer membrane biogenesis; LPS O-antigen biosynthesis. Its function is as follows. Catalyzes the transfer of the GlcNAc-1-phosphate moiety from UDP-GlcNAc onto the carrier lipid undecaprenyl phosphate (C55-P), yielding GlcNAc-pyrophosphoryl-undecaprenyl (GlcNAc-PP-C55). The polypeptide is Undecaprenyl-phosphate alpha-N-acetylglucosaminyl 1-phosphate transferase (Haemophilus influenzae (strain ATCC 51907 / DSM 11121 / KW20 / Rd)).